The sequence spans 199 residues: Protein-methionine-sulfoxide reductase heme-binding subunit MsrQ (199 aa).

Helical transmembrane passes span 10 to 30 (WLKV…FWAI), 82 to 102 (LWCF…ELGI), 116 to 136 (PYLT…LTST), and 153 to 173 (VVYL…KILS).

The protein belongs to the MsrQ family. Heterodimer of a catalytic subunit (MsrP) and a heme-binding subunit (MsrQ). Requires FMN as cofactor. Heme b is required as a cofactor.

The protein localises to the cell inner membrane. In terms of biological role, part of the MsrPQ system that repairs oxidized periplasmic proteins containing methionine sulfoxide residues (Met-O), using respiratory chain electrons. Thus protects these proteins from oxidative-stress damage caused by reactive species of oxygen and chlorine generated by the host defense mechanisms. MsrPQ is essential for the maintenance of envelope integrity under bleach stress, rescuing a wide series of structurally unrelated periplasmic proteins from methionine oxidation, including the primary periplasmic chaperone SurA and the lipoprotein Pal. MsrQ provides electrons for reduction to the reductase catalytic subunit MsrP, using the quinone pool of the respiratory chain. The sequence is that of Protein-methionine-sulfoxide reductase heme-binding subunit MsrQ from Salmonella enteritidis PT4 (strain P125109).